A 1312-amino-acid polypeptide reads, in one-letter code: Beta-N-acetylhexosaminidase (1312 aa).

An N-terminal signal peptide occupies residues 1–33 (MKHEKQQRFSIRKYAVGAASVLIGFAFQAQTVA). Positions 38 to 59 (TPTTTENQPTIHTVSDSPQSSE) are enriched in polar residues. The segment at 38 to 178 (TPTTTENQPT…ATEAGKERAA (141 aa)) is disordered. Positions 118–177 (AEKETANKKAEEASPKKEEAKEVDSKESNTDKTDKDKPAKKDEAKAEADKPATEAGKERA) are enriched in basic and acidic residues. Catalytic domain stretches follow at residues 176–616 (RAAT…TPEA) and 621–1046 (EAKR…PAVT). 2 consecutive G5 domains span residues 1059 to 1138 (NVET…GAPV) and 1150 to 1230 (TTEV…GTMV). The segment at 1244–1290 (EEKPKLEIPSQPAPSTAPAEESKVLPQDPAPVVTEKKLPETGTHDSA) is disordered. Over residues 1277–1286 (TEKKLPETGT) the composition is skewed to basic and acidic residues. Residues 1281 to 1285 (LPETG) carry the LPXTG sorting signal motif. Residue threonine 1284 is modified to Pentaglycyl murein peptidoglycan amidated threonine. Positions 1285 to 1312 (GTHDSAGLVVAGLMSTLAAYGLTKRKED) are cleaved as a propeptide — removed by sortase.

It belongs to the glycosyl hydrolase 20 family.

Its subcellular location is the secreted. It localises to the cell wall. It carries out the reaction Hydrolysis of terminal non-reducing N-acetyl-D-hexosamine residues in N-acetyl-beta-D-hexosaminides.. This is Beta-N-acetylhexosaminidase (strH) from Streptococcus pneumoniae serotype 4 (strain ATCC BAA-334 / TIGR4).